We begin with the raw amino-acid sequence, 116 residues long: Large ribosomal subunit protein uL18 (116 aa).

Belongs to the universal ribosomal protein uL18 family. In terms of assembly, part of the 50S ribosomal subunit; part of the 5S rRNA/L5/L18/L25 subcomplex. Contacts the 5S and 23S rRNAs.

Functionally, this is one of the proteins that bind and probably mediate the attachment of the 5S RNA into the large ribosomal subunit, where it forms part of the central protuberance. The polypeptide is Large ribosomal subunit protein uL18 (Shewanella sediminis (strain HAW-EB3)).